Consider the following 184-residue polypeptide: MILPIYVYGQPVLRKEAEDITPDYPNLKELIANMFETMNRADGVGLAAPQIGLPIRVVTIDLDVMSDDLPEFKDFRRAYINPHILEVGGEEVSMEEGCLSLPGIHEAVKRPDRIHVTYLDEELKEHDEWVEGYLARVMQHEFDHLDGKMFIDHLSALRKQMIKGKLGAMLKGKARCSYKVKTIK.

Residues Cys98 and His140 each contribute to the Fe cation site. Residue Glu141 is part of the active site. A Fe cation-binding site is contributed by His144.

This sequence belongs to the polypeptide deformylase family. Fe(2+) serves as cofactor.

The catalysed reaction is N-terminal N-formyl-L-methionyl-[peptide] + H2O = N-terminal L-methionyl-[peptide] + formate. Functionally, removes the formyl group from the N-terminal Met of newly synthesized proteins. Requires at least a dipeptide for an efficient rate of reaction. N-terminal L-methionine is a prerequisite for activity but the enzyme has broad specificity at other positions. In Phocaeicola vulgatus (strain ATCC 8482 / DSM 1447 / JCM 5826 / CCUG 4940 / NBRC 14291 / NCTC 11154) (Bacteroides vulgatus), this protein is Peptide deformylase.